The chain runs to 1755 residues: Transposon Ty1-DR6 Gag-Pol polyprotein (1755 aa).

Polar residues-rich tracts occupy residues 1-23, 48-60, and 127-152; these read MESQQLSQHSPISHGSACASVTS, TKANSQQTTTPAS, and QSQFPQYPSSVGTPLSTPSPESGNTF. 3 disordered regions span residues 1–93, 126–174, and 352–421; these read MESQ…MMTQ, PQSQ…PPPM, and GSRN…SKST. A compositionally biased stretch (low complexity) spans 153–165; the sequence is TDSSSADSDMTST. The RNA-binding stretch occupies residues 299-401; sequence NNGIHINNKV…NSKSKTARAH (103 aa). Positions 402–418 are enriched in low complexity; sequence NVSTSNNSPSTDNDSIS. Position 416 is a phosphoserine (serine 416). Catalysis depends on aspartate 461, which acts as the For protease activity; shared with dimeric partner. The segment at 583-640 is integrase-type zinc finger-like; it reads NVHTSESTRKYPYPFIHRMLAHANAQTIRYSLKNNTITYFNESDVDWSSAIDYQCPDC. The Integrase catalytic domain maps to 660-835; the sequence is NSYEPFQYLH…AGLDISTLLP (176 aa). Aspartate 671 and aspartate 736 together coordinate Mg(2+). Disordered stretches follow at residues 956–1087, 1092–1111, and 1130–1187; these read SKAV…ETEK, RSPSIDASPPENNSSHNIVP, and DLPL…DNET. Over residues 960-969 the composition is skewed to low complexity; the sequence is SPTDSTPPST. Polar residues predominate over residues 1005–1015; that stretch reads STPQISNIEST. Over residues 1038–1053 the composition is skewed to basic and acidic residues; the sequence is ESSHASKSKDFRHSDS. Polar residues-rich tracts occupy residues 1054–1082 and 1101–1111; these read YSENETNHTNVPISSTGGTNNKTVPQISD and PENNSSHNIVP. Positions 1178 to 1212 match the Bipartite nuclear localization signal motif; sequence KKRSLEDNETEIKVSRDTWNTKNMRSLEPPRSKKR. A Reverse transcriptase Ty1/copia-type domain is found at 1338–1476; it reads NNYYITQLDI…DILGLEIKYQ (139 aa). 6 residues coordinate Mg(2+): aspartate 1346, aspartate 1427, aspartate 1428, aspartate 1610, glutamate 1652, and aspartate 1685. Residues 1610-1752 form the RNase H Ty1/copia-type domain; that stretch reads DASYGNQPYY…IKTFKLLTNK (143 aa).

In terms of assembly, the capsid protein forms a homotrimer, from which the VLPs are assembled. The protease is a homodimer, whose active site consists of two apposed aspartic acid residues. Initially, virus-like particles (VLPs) are composed of the structural unprocessed proteins Gag and Gag-Pol, and also contain the host initiator methionine tRNA (tRNA(i)-Met) which serves as a primer for minus-strand DNA synthesis, and a dimer of genomic Ty RNA. Processing of the polyproteins occurs within the particle and proceeds by an ordered pathway, called maturation. First, the protease (PR) is released by autocatalytic cleavage of the Gag-Pol polyprotein yielding capsid protein p45 and a Pol-p154 precursor protein. This cleavage is a prerequisite for subsequent processing of Pol-p154 at the remaining sites to release the mature structural and catalytic proteins. Maturation takes place prior to the RT reaction and is required to produce transposition-competent VLPs.

It localises to the cytoplasm. The protein resides in the nucleus. The catalysed reaction is DNA(n) + a 2'-deoxyribonucleoside 5'-triphosphate = DNA(n+1) + diphosphate. It catalyses the reaction Endonucleolytic cleavage to 5'-phosphomonoester.. Its function is as follows. Capsid protein (CA) is the structural component of the virus-like particle (VLP), forming the shell that encapsulates the retrotransposons dimeric RNA genome. The particles are assembled from trimer-clustered units and there are holes in the capsid shells that allow for the diffusion of macromolecules. CA also has nucleocapsid-like chaperone activity, promoting primer tRNA(i)-Met annealing to the multipartite primer-binding site (PBS), dimerization of Ty1 RNA and initiation of reverse transcription. Functionally, the aspartyl protease (PR) mediates the proteolytic cleavages of the Gag and Gag-Pol polyproteins after assembly of the VLP. In terms of biological role, reverse transcriptase/ribonuclease H (RT) is a multifunctional enzyme that catalyzes the conversion of the retro-elements RNA genome into dsDNA within the VLP. The enzyme displays a DNA polymerase activity that can copy either DNA or RNA templates, and a ribonuclease H (RNase H) activity that cleaves the RNA strand of RNA-DNA heteroduplexes during plus-strand synthesis and hydrolyzes RNA primers. The conversion leads to a linear dsDNA copy of the retrotransposon that includes long terminal repeats (LTRs) at both ends. Integrase (IN) targets the VLP to the nucleus, where a subparticle preintegration complex (PIC) containing at least integrase and the newly synthesized dsDNA copy of the retrotransposon must transit the nuclear membrane. Once in the nucleus, integrase performs the integration of the dsDNA into the host genome. The polypeptide is Transposon Ty1-DR6 Gag-Pol polyprotein (TY1B-DR6) (Saccharomyces cerevisiae (strain ATCC 204508 / S288c) (Baker's yeast)).